A 128-amino-acid chain; its full sequence is UPF0102 protein RPB_0420 (128 aa).

The protein belongs to the UPF0102 family.

This Rhodopseudomonas palustris (strain HaA2) protein is UPF0102 protein RPB_0420.